Here is a 60-residue protein sequence, read N- to C-terminus: Prokaryotic ubiquitin-like protein UBact (60 aa).

The tract at residues 1–60 (MPERKTQPTTDQPWTKPNDGGDESGPRSPEVERPNTRDLLERMKRVDPRQARRYRQRSGE) is disordered. The segment covering 29-50 (PEVERPNTRDLLERMKRVDPRQ) has biased composition (basic and acidic residues). Residues 51–60 (ARRYRQRSGE) are compositionally biased toward basic residues. An Isoglutamyl lysine isopeptide (Glu-Lys) (interchain with K-? in acceptor proteins) cross-link involves residue E60.

The protein belongs to the ubiquitin-like protein UBact family.

May function as a protein modifier covalently attached to lysine residues of substrate proteins. This may serve to target the modified proteins for degradation by proteasomes. This Fraserbacteria sp. (strain RBG_16_55_9) protein is Prokaryotic ubiquitin-like protein UBact.